The chain runs to 1196 residues: DNA polymerase beta (1196 aa).

Belongs to the DNA polymerase type-B family.

It carries out the reaction DNA(n) + a 2'-deoxyribonucleoside 5'-triphosphate = DNA(n+1) + diphosphate. Functionally, DNA-directed DNA polymerase involved in viral DNA replication. This chain is DNA polymerase beta, found in African swine fever virus (isolate Pig/Kenya/KEN-50/1950) (ASFV).